We begin with the raw amino-acid sequence, 509 residues long: MDEFQRNSNXHRXWQQLFLYPLFFREDLYAIAHDHHLDRSGSSEPTEIFFSHFFSFLTVKRSIRRIRKQNKSISLFGNSDSNKLIEYNKNFSFKSMLEGFTIVLEVSIAMTSKHFIKGMDGWNSLRSIHCIFPFMEDKLPHSNYISDIRVPYSIHPEILVRIFRRWIRDVPSLHLLRLILHEWKNSFSQENLEKVLITQRGNTRFSLFLWNSYVYECESFLIPLIKRFFNPQSLLYGSFPDRTHFEKKIKDIVIFPLQKISPKXIWLLKDSFIHYVRYGERSLIALKGTHLQVKKCRYHLFHFWQYYFHLWFQPYRICSLELSKTSFSFLGFFLNVKMRPLVVRAKMLDDLFITDLITNELNPIAPIRSILFSLAKEKFCDISGWPISKLSWTSLSDDDILDRFDRIWINLFHYYSGSINQDGLYHIKYILLLSCAKTLACKHKSTIRVVREQLGSELFTNSFSKEREFISSSFSKTRSQRERIWNSEISQRNPLXXFWQKMENKQIEN.

Belongs to the intron maturase 2 family. MatK subfamily.

It localises to the plastid. Its subcellular location is the chloroplast. Usually encoded in the trnK tRNA gene intron. Probably assists in splicing its own and other chloroplast group II introns. In Thuja occidentalis (Northern white-cedar), this protein is Maturase K.